A 176-amino-acid polypeptide reads, in one-letter code: Phosphopantetheine adenylyltransferase (176 aa).

Ser-8 lines the substrate pocket. Residues 8–9 (SF) and His-16 contribute to the ATP site. 3 residues coordinate substrate: Lys-40, Thr-72, and Arg-86. Residues 87–89 (GLR), Glu-97, and 122–128 (YSFLSSS) contribute to the ATP site.

This sequence belongs to the bacterial CoaD family. Homohexamer. Mg(2+) serves as cofactor.

It is found in the cytoplasm. It catalyses the reaction (R)-4'-phosphopantetheine + ATP + H(+) = 3'-dephospho-CoA + diphosphate. Its pathway is cofactor biosynthesis; coenzyme A biosynthesis; CoA from (R)-pantothenate: step 4/5. In terms of biological role, reversibly transfers an adenylyl group from ATP to 4'-phosphopantetheine, yielding dephospho-CoA (dPCoA) and pyrophosphate. This is Phosphopantetheine adenylyltransferase from Acaryochloris marina (strain MBIC 11017).